A 1026-amino-acid chain; its full sequence is Contactin-4 (1026 aa).

Residues 1–18 (MRLPWELLVLQSFMLCLA) form the signal peptide. Ig-like C2-type domains follow at residues 32-117 (PSHV…AKLQ), 122-206 (ENFK…HQVL), 225-311 (PKIE…GQVT), 316-400 (PNWV…AELS), 406-493 (PDFS…GNVV), and 497-586 (PTKV…DKLS). 6 cysteine pairs are disulfide-bonded: Cys50–Cys100, Cys144–Cys194, Cys247–Cys295, Cys337–Cys384, Cys429–Cys477, and Cys519–Cys576. Residues Asn65, Asn90, and Asn191 are each glycosylated (N-linked (GlcNAc...) asparagine). N-linked (GlcNAc...) asparagine glycans are attached at residues Asn370, Asn375, and Asn466. 4 consecutive Fibronectin type-III domains span residues 599-697 (PPEA…TEEA), 702-799 (TPAN…SAEE), 804-899 (PPAS…TRKP), and 900-995 (PPSQ…ISNS). Residues 685-710 (PSRPSEKRRTEEALPEVTPANVSGGG) form a disordered region. A compositionally biased stretch (basic and acidic residues) spans 687-696 (RPSEKRRTEE). Asn705, Asn764, Asn858, Asn893, Asn911, Asn929, and Asn954 each carry an N-linked (GlcNAc...) asparagine glycan. A lipid anchor (GPI-anchor amidated serine) is attached at Ser1000. Positions 1001 to 1026 (GASTSNACTLSAISTIMISLTARSSL) are cleaved as a propeptide — removed in mature form.

The protein belongs to the immunoglobulin superfamily. Contactin family. In terms of assembly, interacts with PTPRG. Specifically expressed in the nervous system. Not expressed in heart, spleen, lung, liver, kidney or skeletal muscle. In the hippocampus, it is highly expressed in CA1 pyramidal cells and weakly expressed in other regions of the hippocampus.

It localises to the cell membrane. The protein resides in the secreted. Functionally, contactins mediate cell surface interactions during nervous system development. Has some neurite outgrowth-promoting activity. May be involved in synaptogenesis. The polypeptide is Contactin-4 (Cntn4) (Rattus norvegicus (Rat)).